A 483-amino-acid polypeptide reads, in one-letter code: Proline--tRNA ligase (483 aa).

This sequence belongs to the class-II aminoacyl-tRNA synthetase family. ProS type 3 subfamily. In terms of assembly, homodimer.

Its subcellular location is the cytoplasm. The enzyme catalyses tRNA(Pro) + L-proline + ATP = L-prolyl-tRNA(Pro) + AMP + diphosphate. In terms of biological role, catalyzes the attachment of proline to tRNA(Pro) in a two-step reaction: proline is first activated by ATP to form Pro-AMP and then transferred to the acceptor end of tRNA(Pro). This Natranaerobius thermophilus (strain ATCC BAA-1301 / DSM 18059 / JW/NM-WN-LF) protein is Proline--tRNA ligase.